Here is a 93-residue protein sequence, read N- to C-terminus: Small ribosomal subunit protein uS19 (93 aa).

This sequence belongs to the universal ribosomal protein uS19 family.

In terms of biological role, protein S19 forms a complex with S13 that binds strongly to the 16S ribosomal RNA. This chain is Small ribosomal subunit protein uS19, found in Lawsonia intracellularis (strain PHE/MN1-00).